A 75-amino-acid polypeptide reads, in one-letter code: Serine rich endogenous peptide 4 (75 aa).

An N-terminal signal peptide occupies residues 1–31; it reads MATKTSNLGHLLLSLFILLLFILSQVGVAQA. The interval 51–75 is disordered; it reads PPPLRGIVKPPIASFHSASPKDKGP. Positions 61–75 match the SCOOP motif motif; that stretch reads PIASFHSASPKDKGP. The SxS motif essential for MIK2 binding motif lies at 67–69; that stretch reads SAS.

Belongs to the serine rich endogenous peptide (SCOOP) phytocytokine family. As to quaternary structure, interacts with MIK2 (via extracellular leucine-rich repeat domain); this interaction triggers the formation of complex between MIK2 and the BAK1/SERK3 and SERK4 coreceptors, and subsequent BAK1 activation by phosphorylation. Mostly expressed in leaves and seedlings shoots, and, to a lower extent, in roots, stems, siliques, seeds and flowers.

It is found in the cell membrane. The protein resides in the secreted. It localises to the extracellular space. The protein localises to the apoplast. In terms of biological role, brassicaceae-specific phytocytokine (plant endogenous peptide released into the apoplast) perceived by MIK2 in a BAK1/SERK3 and SERK4 coreceptors-dependent manner, that modulates various physiological and antimicrobial processes including growth prevention and reactive oxygen species (ROS) response regulation. Inhibits root growth. Prevents general growth and development. Exhibits antibacterial effects against Pseudomonas syringae pv. tomato DC3000, Ralstonia solanacearum, Bacillus subtilis and Agrobacterium tumefaciens, thus being an antimicrobial peptide (AMP). The chain is Serine rich endogenous peptide 4 from Arabidopsis thaliana (Mouse-ear cress).